The primary structure comprises 190 residues: dCTP deaminase, dUMP-forming (190 aa).

DCTP is bound by residues Lys101–Arg106, Asp119, Thr127–Glu129, Gln148, Tyr162, Lys170, and Gln174. Residue Glu129 is the Proton donor/acceptor of the active site. Positions His160–Thr190 are disordered. The span at Tyr171–Thr190 shows a compositional bias: polar residues.

It belongs to the dCTP deaminase family. In terms of assembly, homotrimer.

The enzyme catalyses dCTP + 2 H2O = dUMP + NH4(+) + diphosphate. The protein operates within pyrimidine metabolism; dUMP biosynthesis; dUMP from dCTP: step 1/1. Functionally, bifunctional enzyme that catalyzes both the deamination of dCTP to dUTP and the hydrolysis of dUTP to dUMP without releasing the toxic dUTP intermediate. The polypeptide is dCTP deaminase, dUMP-forming (Mycobacterium bovis (strain ATCC BAA-935 / AF2122/97)).